Here is a 267-residue protein sequence, read N- to C-terminus: Glutamate 5-kinase (267 aa).

Residue lysine 14 coordinates ATP. Substrate contacts are provided by serine 54, aspartate 141, and asparagine 157. Residues 177 to 178 and 219 to 225 each bind ATP; these read SD and TGGMMSK.

Belongs to the glutamate 5-kinase family.

The protein resides in the cytoplasm. The enzyme catalyses L-glutamate + ATP = L-glutamyl 5-phosphate + ADP. It participates in amino-acid biosynthesis; L-proline biosynthesis; L-glutamate 5-semialdehyde from L-glutamate: step 1/2. Functionally, catalyzes the transfer of a phosphate group to glutamate to form L-glutamate 5-phosphate. The sequence is that of Glutamate 5-kinase from Streptococcus thermophilus (strain CNRZ 1066).